The following is a 430-amino-acid chain: Xaa-Pro aminopeptidase (430 aa).

Mn(2+) contacts are provided by aspartate 254, aspartate 265, histidine 348, glutamate 377, and glutamate 400.

Belongs to the peptidase M24B family. In terms of assembly, homotetramer. It depends on Mn(2+) as a cofactor.

It carries out the reaction Release of any N-terminal amino acid, including proline, that is linked to proline, even from a dipeptide or tripeptide.. This Haemophilus influenzae (strain ATCC 51907 / DSM 11121 / KW20 / Rd) protein is Xaa-Pro aminopeptidase (pepP).